A 330-amino-acid chain; its full sequence is Putative zinc finger protein CONSTANS-LIKE 11 (330 aa).

Zn(2+) is bound by residues Cys-5, Cys-8, Cys-28, and His-33. A B box-type 1; atypical zinc finger spans residues 5–47; that stretch reads CDFCGTEKALIYCKSDSAKLCLNCDVNVHSANPLSQRHTRSLL. The B box-type 2; degenerate zinc-finger motif lies at 48-88; that stretch reads CEKCSLQPTAVHCMNENVSLCQGCQWTASNCTGLGHRLQSL. Residues 276–318 enclose the CCT domain; sequence RDEAKKRYKQKKSKRMFGKQIRYASRKARADTRKRVKGRFVKS.

It belongs to the CONSTANS family.

The protein localises to the nucleus. This is Putative zinc finger protein CONSTANS-LIKE 11 (COL11) from Arabidopsis thaliana (Mouse-ear cress).